The following is a 228-amino-acid chain: Octanoyltransferase (228 aa).

The 184-residue stretch at 30 to 213 (NKVEDIMLLL…YFSRVFDFEP (184 aa)) folds into the BPL/LPL catalytic domain. Substrate-binding positions include 75 to 82 (RGGDVTYH), 143 to 145 (AIG), and 156 to 158 (GFA). Residue cysteine 174 is the Acyl-thioester intermediate of the active site.

It belongs to the LipB family.

It is found in the cytoplasm. The enzyme catalyses octanoyl-[ACP] + L-lysyl-[protein] = N(6)-octanoyl-L-lysyl-[protein] + holo-[ACP] + H(+). The protein operates within protein modification; protein lipoylation via endogenous pathway; protein N(6)-(lipoyl)lysine from octanoyl-[acyl-carrier-protein]: step 1/2. Functionally, catalyzes the transfer of endogenously produced octanoic acid from octanoyl-acyl-carrier-protein onto the lipoyl domains of lipoate-dependent enzymes. Lipoyl-ACP can also act as a substrate although octanoyl-ACP is likely to be the physiological substrate. The sequence is that of Octanoyltransferase from Desulforamulus reducens (strain ATCC BAA-1160 / DSM 100696 / MI-1) (Desulfotomaculum reducens).